The sequence spans 87 residues: Phosphoribosyl-ATP pyrophosphatase (87 aa).

Belongs to the PRA-PH family.

Its subcellular location is the cytoplasm. It carries out the reaction 1-(5-phospho-beta-D-ribosyl)-ATP + H2O = 1-(5-phospho-beta-D-ribosyl)-5'-AMP + diphosphate + H(+). It functions in the pathway amino-acid biosynthesis; L-histidine biosynthesis; L-histidine from 5-phospho-alpha-D-ribose 1-diphosphate: step 2/9. The chain is Phosphoribosyl-ATP pyrophosphatase from Salinibacter ruber (strain DSM 13855 / M31).